Reading from the N-terminus, the 130-residue chain is Small ribosomal subunit protein bS16 (130 aa).

The disordered stretch occupies residues 80 to 130 (AGHTPKKERANMKKAQPGKKAVERAEEKAAKASAAAEAPAEAPAAEAAAEE). Over residues 99 to 109 (KAVERAEEKAA) the composition is skewed to basic and acidic residues. Positions 110-130 (KASAAAEAPAEAPAAEAAAEE) are enriched in low complexity.

The protein belongs to the bacterial ribosomal protein bS16 family.

The protein is Small ribosomal subunit protein bS16 of Jannaschia sp. (strain CCS1).